The following is a 105-amino-acid chain: T cell receptor alpha variable 40 (105 aa).

The N-terminal stretch at 1-19 is a signal peptide; it reads MNSSLDFLILILMFGGTSS. The 86-residue stretch at 20 to 105 folds into the Ig-like domain; it reads NSVKQTGQIT…DSAVYYCLLG (86 aa). N39 carries N-linked (GlcNAc...) asparagine glycosylation. A disulfide bridge links C40 with C102.

Alpha-beta TR is a heterodimer composed of an alpha and beta chain; disulfide-linked. The alpha-beta TR is associated with the transmembrane signaling CD3 coreceptor proteins to form the TR-CD3 (TcR or TCR). The assembly of alpha-beta TR heterodimers with CD3 occurs in the endoplasmic reticulum where a single alpha-beta TR heterodimer associates with one CD3D-CD3E heterodimer, one CD3G-CD3E heterodimer and one CD247 homodimer forming a stable octameric structure. CD3D-CD3E and CD3G-CD3E heterodimers preferentially associate with TR alpha and TR beta chains, respectively. The association of the CD247 homodimer is the last step of TcR assembly in the endoplasmic reticulum and is required for transport to the cell surface.

The protein resides in the cell membrane. V region of the variable domain of T cell receptor (TR) alpha chain that participates in the antigen recognition. Alpha-beta T cell receptors are antigen specific receptors which are essential to the immune response and are present on the cell surface of T lymphocytes. Recognize peptide-major histocompatibility (MH) (pMH) complexes that are displayed by antigen presenting cells (APC), a prerequisite for efficient T cell adaptive immunity against pathogens. Binding of alpha-beta TR to pMH complex initiates TR-CD3 clustering on the cell surface and intracellular activation of LCK that phosphorylates the ITAM motifs of CD3G, CD3D, CD3E and CD247 enabling the recruitment of ZAP70. In turn ZAP70 phosphorylates LAT, which recruits numerous signaling molecules to form the LAT signalosome. The LAT signalosome propagates signal branching to three major signaling pathways, the calcium, the mitogen-activated protein kinase (MAPK) kinase and the nuclear factor NF-kappa-B (NF-kB) pathways, leading to the mobilization of transcription factors that are critical for gene expression and essential for T cell growth and differentiation. The T cell repertoire is generated in the thymus, by V-(D)-J rearrangement. This repertoire is then shaped by intrathymic selection events to generate a peripheral T cell pool of self-MH restricted, non-autoaggressive T cells. Post-thymic interaction of alpha-beta TR with the pMH complexes shapes TR structural and functional avidity. This chain is T cell receptor alpha variable 40, found in Homo sapiens (Human).